Reading from the N-terminus, the 320-residue chain is Short-chain dehydrogenase TIC 32 A, chloroplastic (320 aa).

NADP(+) contacts are provided by residues 40-46 (GGTSGIG), 92-93 (DL), asparagine 119, and threonine 140. Serine 174 lines the substrate pocket. The active-site Proton acceptor is tyrosine 196. The segment at 301 to 317 (DTTLADKLWDFSIKLVE) is interaction with calmodulin.

This sequence belongs to the short-chain dehydrogenases/reductases (SDR) family. In terms of assembly, part of the Tic complex. In terms of tissue distribution, expressed in the dehiscence zone of developing pods.

Its subcellular location is the plastid. It is found in the chloroplast inner membrane. Functionally, involved in protein precursor import into chloroplasts. Maybe involved in pod abscission or dehiscence (pod shatter). This chain is Short-chain dehydrogenase TIC 32 A, chloroplastic, found in Brassica napus (Rape).